Consider the following 64-residue polypeptide: Alpha-conotoxin CnIC (64 aa).

Residues 1-21 (MGMRMMFTVFLLVVLTTTVVS) form the signal peptide. A propeptide spanning residues 22–47 (FPSDSASDVRDDEAKDERSDMYKSKR) is cleaved from the precursor. Position 48 is a deamidated asparagine; in CnIH; partial (Asn48). Intrachain disulfides connect Cys51–Cys56 and Cys52–Cys62. Residue Cys62 is modified to Cysteine amide.

Belongs to the conotoxin A superfamily. In terms of tissue distribution, expressed by the venom duct.

Its subcellular location is the secreted. Functionally, alpha-conotoxins act on postsynaptic membranes, they bind to the nicotinic acetylcholine receptors (nAChR) and thus inhibit them. This is Alpha-conotoxin CnIC from Conus consors (Singed cone).